The primary structure comprises 319 residues: MRHLLSAADLDRDAAVRVLDVAEEMAATQRREIKKLPTLRGRTVVNLFFEDSTRTRTSFEAAAKRLSADVINFSAKGSSVSKGESLKDTALTLEAMGADAVVVRHGSSGAPHRLAHAGWTRGAVVNAGDGTHEHPTQALLDAYTMRRHLTSGAGDLTGARVVIVGDVLHSRVARSNVLLLRTLGAHVTLVAPPTLLPVGVESWPCATSHDLDAALRDGAPDAVMMLRVQAERMDASKGSFFPSAREYGRRYGLGRQRLALLPEHTIVMHPGPMNRGLEISAEAADSARSTIVEQVGNGVAVRMAVLYLLLAGELPGGDA.

Positions 54 and 55 each coordinate carbamoyl phosphate. K82 contacts L-aspartate. 3 residues coordinate carbamoyl phosphate: R104, H134, and Q137. L-aspartate is bound by residues R171 and R227. G271 and P272 together coordinate carbamoyl phosphate.

It belongs to the aspartate/ornithine carbamoyltransferase superfamily. ATCase family. In terms of assembly, heterododecamer (2C3:3R2) of six catalytic PyrB chains organized as two trimers (C3), and six regulatory PyrI chains organized as three dimers (R2).

The enzyme catalyses carbamoyl phosphate + L-aspartate = N-carbamoyl-L-aspartate + phosphate + H(+). It participates in pyrimidine metabolism; UMP biosynthesis via de novo pathway; (S)-dihydroorotate from bicarbonate: step 2/3. In terms of biological role, catalyzes the condensation of carbamoyl phosphate and aspartate to form carbamoyl aspartate and inorganic phosphate, the committed step in the de novo pyrimidine nucleotide biosynthesis pathway. In Kineococcus radiotolerans (strain ATCC BAA-149 / DSM 14245 / SRS30216), this protein is Aspartate carbamoyltransferase catalytic subunit.